Here is a 396-residue protein sequence, read N- to C-terminus: Acetate kinase (396 aa).

Asn-7 contributes to the Mg(2+) binding site. Lys-14 lines the ATP pocket. Position 88 (Arg-88) interacts with substrate. The active-site Proton donor/acceptor is Asp-145. ATP contacts are provided by residues 205-209 (HLGNG), 279-281 (DFR), and 327-331 (GIGEN). Glu-381 lines the Mg(2+) pocket.

This sequence belongs to the acetokinase family. In terms of assembly, homodimer. Requires Mg(2+) as cofactor. Mn(2+) is required as a cofactor.

The protein resides in the cytoplasm. The enzyme catalyses acetate + ATP = acetyl phosphate + ADP. It participates in metabolic intermediate biosynthesis; acetyl-CoA biosynthesis; acetyl-CoA from acetate: step 1/2. Catalyzes the formation of acetyl phosphate from acetate and ATP. Can also catalyze the reverse reaction. The sequence is that of Acetate kinase from Campylobacter jejuni subsp. doylei (strain ATCC BAA-1458 / RM4099 / 269.97).